A 369-amino-acid polypeptide reads, in one-letter code: Isopentenyl-diphosphate delta-isomerase (369 aa).

9-10 (RK) lines the substrate pocket. Residues Thr65, 66-68 (GMT), Ser96, and Asn125 contribute to the FMN site. Substrate is bound at residue 96-98 (SQR). Gln160 contributes to the substrate binding site. Glu161 is a Mg(2+) binding site. FMN contacts are provided by residues Lys193, Ser218, Thr223, 275–277 (GVR), and 296–297 (AL).

Belongs to the IPP isomerase type 2 family. Homooctamer. Dimer of tetramers. FMN serves as cofactor. NADPH is required as a cofactor. Requires Mg(2+) as cofactor.

Its subcellular location is the cytoplasm. It catalyses the reaction isopentenyl diphosphate = dimethylallyl diphosphate. In terms of biological role, involved in the biosynthesis of isoprenoids. Catalyzes the 1,3-allylic rearrangement of the homoallylic substrate isopentenyl (IPP) to its allylic isomer, dimethylallyl diphosphate (DMAPP). The sequence is that of Isopentenyl-diphosphate delta-isomerase from Sulfurisphaera tokodaii (strain DSM 16993 / JCM 10545 / NBRC 100140 / 7) (Sulfolobus tokodaii).